The chain runs to 276 residues: Protein canopy homolog 3 (276 aa).

A signal peptide spans 1 to 16 (MNVFISVVLFLGSARA). The region spanning 30 to 269 (NKCEVCKFVS…EEEIQKKVPL (240 aa)) is the Saposin B-type domain. Cystine bridges form between Cys-32–Cys-190, Cys-35–Cys-178, and Cys-88–Cys-150. Residues 137-162 (NETSAEVADLKKQCDVMVEQYEDVIE) are a coiled coil. A disordered region spans residues 206 to 276 (AEDKKKKKGK…VPLNQPKTEL (71 aa)). 2 stretches are compositionally biased toward basic residues: residues 210 to 219 (KKKKGKKKKG) and 228 to 239 (KEKKVKKKKKKS). The segment covering 240-252 (KISDSESSKRRME) has biased composition (basic and acidic residues).

Belongs to the canopy family.

It is found in the endoplasmic reticulum. In terms of biological role, toll-like receptor (TLR)-specific co-chaperone for HSP90B1. Required for proper TLR folding and hence controls TLR exit from the endoplasmic reticulum. Consequently, required for immune responses. This chain is Protein canopy homolog 3 (cnpy3), found in Danio rerio (Zebrafish).